Consider the following 175-residue polypeptide: Shikimate kinase (175 aa).

17–22 is a binding site for ATP; the sequence is GAGKST. Residue S21 participates in Mg(2+) binding. Substrate contacts are provided by D39, R63, and G85. ATP is bound at residue R123. Residue R142 coordinates substrate. Residue Q159 coordinates ATP.

Belongs to the shikimate kinase family. Monomer. Mg(2+) serves as cofactor.

It is found in the cytoplasm. It carries out the reaction shikimate + ATP = 3-phosphoshikimate + ADP + H(+). Its pathway is metabolic intermediate biosynthesis; chorismate biosynthesis; chorismate from D-erythrose 4-phosphate and phosphoenolpyruvate: step 5/7. Its function is as follows. Catalyzes the specific phosphorylation of the 3-hydroxyl group of shikimic acid using ATP as a cosubstrate. The protein is Shikimate kinase of Photobacterium profundum (strain SS9).